A 530-amino-acid chain; its full sequence is AarF domain-containing protein kinase 1 (530 aa).

The Protein kinase domain maps to 155 to 467; sequence SFDDTPLGTA…ASSFLNMSRC (313 aa). ATP contacts are provided by residues 161 to 169 and K183; that span reads LGTASLAQV. The Proton acceptor role is filled by D315.

The protein belongs to the protein kinase superfamily. ADCK protein kinase family.

The protein localises to the mitochondrion. Appears to be essential for maintaining mitochondrial cristae formation and mitochondrial function by acting via YME1L1 in a kinase-independent manner to regulate essential mitochondrial structural proteins OPA1 and IMMT. The action of this enzyme is not yet clear. It is not known if it has protein kinase activity and what type of substrate it would phosphorylate (Ser, Thr or Tyr). The polypeptide is AarF domain-containing protein kinase 1 (Homo sapiens (Human)).